A 42-amino-acid polypeptide reads, in one-letter code: Photosystem I reaction center subunit IX (42 aa).

Residues 7–27 (YLSVAPVLSTLWFGALAGLLI) traverse the membrane as a helical segment.

The protein belongs to the PsaJ family.

It localises to the plastid. The protein resides in the chloroplast thylakoid membrane. Its function is as follows. May help in the organization of the PsaE and PsaF subunits. The protein is Photosystem I reaction center subunit IX of Guizotia abyssinica (Niger).